Reading from the N-terminus, the 48-residue chain is Large ribosomal subunit protein eL40 (48 aa).

This sequence belongs to the eukaryotic ribosomal protein eL40 family.

This Methanosphaerula palustris (strain ATCC BAA-1556 / DSM 19958 / E1-9c) protein is Large ribosomal subunit protein eL40.